A 185-amino-acid polypeptide reads, in one-letter code: Transcription factor bHLH109 (185 aa).

In terms of domain architecture, bHLH spans arginine 67 to leucine 117.

Belongs to the bHLH protein family. Homodimer.

The protein localises to the nucleus. Its function is as follows. Transcription factor involved in somatic embryogenesis. Acts as a positive regulator of somatic embryo formation. Acts as a positive regulator of ECP63 by targeting its promoter and inducing its expression. This chain is Transcription factor bHLH109 (BHLH109), found in Arabidopsis thaliana (Mouse-ear cress).